A 562-amino-acid polypeptide reads, in one-letter code: Arginine--tRNA ligase (562 aa).

Positions 129-139 match the 'HIGH' region motif; it reads ANPTGPLHVGH.

Belongs to the class-I aminoacyl-tRNA synthetase family. As to quaternary structure, monomer.

It is found in the cytoplasm. The enzyme catalyses tRNA(Arg) + L-arginine + ATP = L-arginyl-tRNA(Arg) + AMP + diphosphate. The protein is Arginine--tRNA ligase of Stenotrophomonas maltophilia (strain K279a).